We begin with the raw amino-acid sequence, 320 residues long: Ferrochelatase (320 aa).

Fe cation contacts are provided by H194 and E275.

This sequence belongs to the ferrochelatase family. As to quaternary structure, monomer.

The protein resides in the cytoplasm. The enzyme catalyses heme b + 2 H(+) = protoporphyrin IX + Fe(2+). The protein operates within porphyrin-containing compound metabolism; protoheme biosynthesis; protoheme from protoporphyrin-IX: step 1/1. Its function is as follows. Catalyzes the ferrous insertion into protoporphyrin IX. In Escherichia coli O45:K1 (strain S88 / ExPEC), this protein is Ferrochelatase.